Consider the following 134-residue polypeptide: UPF0412 protein YaaI (134 aa).

The first 23 residues, 1–23 (MRSVLTISAGLLFGLALSSVAHA), serve as a signal peptide directing secretion.

It belongs to the UPF0412 family.

The sequence is that of UPF0412 protein YaaI from Salmonella agona (strain SL483).